The primary structure comprises 559 residues: 2-succinyl-5-enolpyruvyl-6-hydroxy-3-cyclohexene-1-carboxylate synthase (559 aa).

The protein belongs to the TPP enzyme family. MenD subfamily. As to quaternary structure, homodimer. The cofactor is Mg(2+). Requires Mn(2+) as cofactor. Thiamine diphosphate is required as a cofactor.

It carries out the reaction isochorismate + 2-oxoglutarate + H(+) = 5-enolpyruvoyl-6-hydroxy-2-succinyl-cyclohex-3-ene-1-carboxylate + CO2. The protein operates within quinol/quinone metabolism; 1,4-dihydroxy-2-naphthoate biosynthesis; 1,4-dihydroxy-2-naphthoate from chorismate: step 2/7. It participates in quinol/quinone metabolism; menaquinone biosynthesis. Functionally, catalyzes the thiamine diphosphate-dependent decarboxylation of 2-oxoglutarate and the subsequent addition of the resulting succinic semialdehyde-thiamine pyrophosphate anion to isochorismate to yield 2-succinyl-5-enolpyruvyl-6-hydroxy-3-cyclohexene-1-carboxylate (SEPHCHC). The chain is 2-succinyl-5-enolpyruvyl-6-hydroxy-3-cyclohexene-1-carboxylate synthase from Cytophaga hutchinsonii (strain ATCC 33406 / DSM 1761 / CIP 103989 / NBRC 15051 / NCIMB 9469 / D465).